Consider the following 395-residue polypeptide: Torsin-3A (395 aa).

The first 24 residues, 1–24 (MFFGAFWLLLLLLLPPLRPPGAQG), serve as a signal peptide directing secretion. Residue asparagine 120 is glycosylated (N-linked (GlcNAc...) asparagine). ATP is bound at residue 165 to 172 (GWSGTGKN).

It belongs to the ClpA/ClpB family. Torsin subfamily. As to quaternary structure, may not form homohexamers. N-glycosylated.

Its subcellular location is the cytoplasm. It is found in the endoplasmic reticulum lumen. The chain is Torsin-3A (Tor3a) from Rattus norvegicus (Rat).